A 265-amino-acid chain; its full sequence is Glutamate racemase 2 (265 aa).

Substrate is bound by residues 7–8 and 39–40; these read DS and YG. The Proton donor/acceptor role is filled by C70. 71-72 provides a ligand contact to substrate; sequence NT. C182 functions as the Proton donor/acceptor in the catalytic mechanism. 183-184 is a substrate binding site; sequence TH.

This sequence belongs to the aspartate/glutamate racemases family.

The catalysed reaction is L-glutamate = D-glutamate. It participates in cell wall biogenesis; peptidoglycan biosynthesis. Its function is as follows. Provides the (R)-glutamate required for cell wall biosynthesis. The polypeptide is Glutamate racemase 2 (yrpC) (Bacillus subtilis (strain 168)).